Consider the following 384-residue polypeptide: Ceramide very long chain fatty acid hydroxylase SCS7 (384 aa).

Residues 1–197 (MSTNTSKTLE…NFLEPLTKTA (197 aa)) are Cytoplasmic-facing. A Cytochrome b5 heme-binding domain is found at 9-90 (LELFSKKTVQ…EDEYLIGYLA (82 aa)). His45 and His72 together coordinate heme. Residues 198–216 (WWVVPVAWLPVVVYHMGVA) traverse the membrane as a helical segment. The Lumenal segment spans residues 217–221 (LKNMN). Residues 222-246 (QLFACFLFCVGVFVWTLIEYGLHRF) traverse the membrane as a helical segment. Zn(2+) contacts are provided by His244, His249, His268, His271, and His272. Residues 247-284 (LFHFDDWLPESNIAFATHFLLHGCHHYLPMDKYRLVMP) lie on the Cytoplasmic side of the membrane. The chain crosses the membrane as a helical span at residues 285–302 (PTLFVILCAPFYKLVFAL). Residues 303–304 (LP) are Lumenal-facing. Residues 305 to 328 (LYWAYAGFAGGLFGYVCYDECHFF) traverse the membrane as a helical segment. Zn(2+) contacts are provided by His326, His330, His345, His348, and His349. Residues 329 to 384 (LHHSKLPPFMRKLKKYHLEHHYKNYQLGFGVTSWFWDEVFGTYLGPDAPLSKMKYE) lie on the Cytoplasmic side of the membrane.

This sequence belongs to the sterol desaturase family. SCS7 subfamily. Zn(2+) is required as a cofactor.

Its subcellular location is the endoplasmic reticulum membrane. The enzyme catalyses an N-(1,2 saturated acyl)-(4R)-hydroxysphinganine + 2 Fe(II)-[cytochrome b5] + O2 + 2 H(+) = an N-(2R-hydroxyacyl)-4R-hydroxysphinganine + 2 Fe(III)-[cytochrome b5] + H2O. The catalysed reaction is an N-(1,2-saturated acyl)sphinganine + 2 Fe(II)-[cytochrome b5] + O2 + 2 H(+) = an N-[(2'R)-hydroxyacyl]sphinganine + 2 Fe(III)-[cytochrome b5] + H2O. It catalyses the reaction N-hexacosanoyl-(4R)-hydroxysphinganine + 2 Fe(II)-[cytochrome b5] + O2 + 2 H(+) = N-(2-hydroxyhexacosanyl)-(4R)-hydroxysphinganine + 2 Fe(III)-[cytochrome b5] + H2O. It functions in the pathway sphingolipid metabolism. Functionally, ceramide hydroxylase involved in the hydroxylation of sphingolipid-associated very long chain fatty acids. Postulated to hydroxylate the very long chain fatty acid of dihydroceramides and phytoceramides at C-2. This is Ceramide very long chain fatty acid hydroxylase SCS7 from Saccharomyces cerevisiae (strain ATCC 204508 / S288c) (Baker's yeast).